A 540-amino-acid polypeptide reads, in one-letter code: Chaperonin GroEL (540 aa).

Residues 30–33 (TLGP), 87–91 (DGTTT), glycine 414, 479–481 (NAL), and aspartate 495 contribute to the ATP site.

Belongs to the chaperonin (HSP60) family. As to quaternary structure, forms a cylinder of 14 subunits composed of two heptameric rings stacked back-to-back. Interacts with the co-chaperonin GroES.

It localises to the cytoplasm. It carries out the reaction ATP + H2O + a folded polypeptide = ADP + phosphate + an unfolded polypeptide.. Functionally, together with its co-chaperonin GroES, plays an essential role in assisting protein folding. The GroEL-GroES system forms a nano-cage that allows encapsulation of the non-native substrate proteins and provides a physical environment optimized to promote and accelerate protein folding. The polypeptide is Chaperonin GroEL (Carboxydothermus hydrogenoformans (strain ATCC BAA-161 / DSM 6008 / Z-2901)).